Here is a 149-residue protein sequence, read N- to C-terminus: MEYVPKILVDADACPVKAEIKQVAEQFQLEVIFVASFNHYSVNTNGENWIFVDTGKESADMRMMNIANKGDIIVTQDIGLASILLAKGTYVFSNRGELYREEEMSLMLDIRYRHAKERQQGKYSKGPKAMSDQDRSLFKDRITTFLQNK.

Belongs to the UPF0178 family.

The sequence is that of UPF0178 protein lwe1471 from Listeria welshimeri serovar 6b (strain ATCC 35897 / DSM 20650 / CCUG 15529 / CIP 8149 / NCTC 11857 / SLCC 5334 / V8).